Here is a 793-residue protein sequence, read N- to C-terminus: Serine/threonine-protein kinase CLA4 (793 aa).

Positions 8 to 27 are disordered; the sequence is RELSESDFQDIGPAPKPPPV. A PH domain is found at 56–168; that stretch reads QRKKSGWVSY…WLDSIFSKCP (113 aa). The 14-residue stretch at 173–186 folds into the CRIB domain; sequence VSSPTNFTHKVHVG. Disordered stretches follow at residues 243–369 and 383–476; these read AAAQ…ESPT and QKQL…RPTM. Polar residues-rich tracts occupy residues 258–276, 312–337, and 355–369; these read TLSS…STPP, GVTT…QSGP, and LGNS…ESPT. Positions 498 to 776 constitute a Protein kinase domain; sequence FQMIEKAGQG…TEELLHHSFF (279 aa). ATP-binding positions include 504 to 512 and K545; that span reads AGQGASGSV. The Proton acceptor role is filled by D644.

This sequence belongs to the protein kinase superfamily. STE Ser/Thr protein kinase family. STE20 subfamily.

The catalysed reaction is L-seryl-[protein] + ATP = O-phospho-L-seryl-[protein] + ADP + H(+). The enzyme catalyses L-threonyl-[protein] + ATP = O-phospho-L-threonyl-[protein] + ADP + H(+). Functionally, required for hyphal maturation and for septation. The sequence is that of Serine/threonine-protein kinase CLA4 (CLA4) from Eremothecium gossypii (strain ATCC 10895 / CBS 109.51 / FGSC 9923 / NRRL Y-1056) (Yeast).